The chain runs to 420 residues: Serine--tRNA ligase (420 aa).

229–231 (TAE) contributes to the L-serine binding site. ATP is bound at residue 260 to 262 (RAE). Residue Glu-283 coordinates L-serine. 347–350 (EISS) contributes to the ATP binding site. Ser-382 provides a ligand contact to L-serine.

The protein belongs to the class-II aminoacyl-tRNA synthetase family. Type-1 seryl-tRNA synthetase subfamily. As to quaternary structure, homodimer. The tRNA molecule binds across the dimer.

The protein resides in the cytoplasm. It carries out the reaction tRNA(Ser) + L-serine + ATP = L-seryl-tRNA(Ser) + AMP + diphosphate + H(+). It catalyses the reaction tRNA(Sec) + L-serine + ATP = L-seryl-tRNA(Sec) + AMP + diphosphate + H(+). The protein operates within aminoacyl-tRNA biosynthesis; selenocysteinyl-tRNA(Sec) biosynthesis; L-seryl-tRNA(Sec) from L-serine and tRNA(Sec): step 1/1. In terms of biological role, catalyzes the attachment of serine to tRNA(Ser). Is also able to aminoacylate tRNA(Sec) with serine, to form the misacylated tRNA L-seryl-tRNA(Sec), which will be further converted into selenocysteinyl-tRNA(Sec). The protein is Serine--tRNA ligase of Caldicellulosiruptor bescii (strain ATCC BAA-1888 / DSM 6725 / KCTC 15123 / Z-1320) (Anaerocellum thermophilum).